Reading from the N-terminus, the 146-residue chain is Cytochrome c-type biogenesis protein CcmE (146 aa).

Residues 1–8 (MNPRRKKR) are Cytoplasmic-facing. Residues 9–29 (LGLILALVLGASATVGLMLYA) form a helical; Signal-anchor for type II membrane protein membrane-spanning segment. Residues 30 to 146 (LNQNMDLFYT…EVAEAMKKTH (117 aa)) are Periplasmic-facing. Residues H129 and Y133 each contribute to the heme site.

It belongs to the CcmE/CycJ family.

It is found in the cell inner membrane. Heme chaperone required for the biogenesis of c-type cytochromes. Transiently binds heme delivered by CcmC and transfers the heme to apo-cytochromes in a process facilitated by CcmF and CcmH. The sequence is that of Cytochrome c-type biogenesis protein CcmE from Aliivibrio salmonicida (strain LFI1238) (Vibrio salmonicida (strain LFI1238)).